The chain runs to 280 residues: Tryptophan 2,3-dioxygenase (280 aa).

Residues 47–51, tyrosine 109, and arginine 113 contribute to the substrate site; that span reads FVVQH. Position 236 (histidine 236) interacts with heme. Residue threonine 250 participates in substrate binding.

Belongs to the tryptophan 2,3-dioxygenase family. Homotetramer. Requires heme as cofactor.

It carries out the reaction L-tryptophan + O2 = N-formyl-L-kynurenine. It participates in amino-acid degradation; L-tryptophan degradation via kynurenine pathway; L-kynurenine from L-tryptophan: step 1/2. In terms of biological role, heme-dependent dioxygenase that catalyzes the oxidative cleavage of the L-tryptophan (L-Trp) pyrrole ring and converts L-tryptophan to N-formyl-L-kynurenine. Catalyzes the oxidative cleavage of the indole moiety. The chain is Tryptophan 2,3-dioxygenase from Serratia proteamaculans (strain 568).